The sequence spans 361 residues: Pseudouridine-5'-phosphate glycosidase (361 aa).

The active-site Proton donor is the Glu-27. 2 residues coordinate substrate: Lys-88 and Val-108. Residue Asp-140 coordinates Mn(2+). 142 to 144 (SAD) is a binding site for substrate. The active-site Nucleophile is Lys-161. Residues 306 to 361 (DRSPTDPAAPDPTAPDPAAPDPTAPDPAAPDSAAPDLAGPDPSAPDPAAVARAHRP) form a disordered region. A compositionally biased stretch (pro residues) spans 312-333 (PAAPDPTAPDPAAPDPTAPDPA). The span at 334–354 (APDSAAPDLAGPDPSAPDPAA) shows a compositional bias: low complexity.

The protein belongs to the pseudouridine-5'-phosphate glycosidase family. In terms of assembly, homotrimer. Requires Mn(2+) as cofactor.

The enzyme catalyses D-ribose 5-phosphate + uracil = psi-UMP + H2O. Its function is as follows. Catalyzes the reversible cleavage of pseudouridine 5'-phosphate (PsiMP) to ribose 5-phosphate and uracil. Functions biologically in the cleavage direction, as part of a pseudouridine degradation pathway. The sequence is that of Pseudouridine-5'-phosphate glycosidase from Frankia alni (strain DSM 45986 / CECT 9034 / ACN14a).